The chain runs to 343 residues: UPF0284 protein Msed_0735 (343 aa).

It belongs to the UPF0284 family.

This Metallosphaera sedula (strain ATCC 51363 / DSM 5348 / JCM 9185 / NBRC 15509 / TH2) protein is UPF0284 protein Msed_0735.